A 213-amino-acid polypeptide reads, in one-letter code: Adenylate kinase (213 aa).

Residue G10–T15 coordinates ATP. An NMP region spans residues S30–V59. AMP-binding positions include T31, R36, E57–V59, G85–R88, and Q92. The LID stretch occupies residues G126–D163. ATP is bound at residue R127. Positions 130 and 133 each coordinate Zn(2+). Residue T136–Y137 participates in ATP binding. 2 residues coordinate Zn(2+): C150 and C153. The AMP site is built by R160 and R171. Q199 is an ATP binding site.

The protein belongs to the adenylate kinase family. As to quaternary structure, monomer.

It localises to the cytoplasm. The catalysed reaction is AMP + ATP = 2 ADP. It functions in the pathway purine metabolism; AMP biosynthesis via salvage pathway; AMP from ADP: step 1/1. Functionally, catalyzes the reversible transfer of the terminal phosphate group between ATP and AMP. Plays an important role in cellular energy homeostasis and in adenine nucleotide metabolism. The polypeptide is Adenylate kinase (Lachnospira eligens (strain ATCC 27750 / DSM 3376 / VPI C15-48 / C15-B4) (Eubacterium eligens)).